The primary structure comprises 701 residues: Elongation factor G 2 (701 aa).

One can recognise a tr-type G domain in the interval 8–291 (ERYRNIGISA…AVIDYLPSPA (284 aa)). Residues 17–24 (AHIDAGKT), 88–92 (DTPGH), and 142–145 (NKMD) each bind GTP.

This sequence belongs to the TRAFAC class translation factor GTPase superfamily. Classic translation factor GTPase family. EF-G/EF-2 subfamily.

Its subcellular location is the cytoplasm. In terms of biological role, catalyzes the GTP-dependent ribosomal translocation step during translation elongation. During this step, the ribosome changes from the pre-translocational (PRE) to the post-translocational (POST) state as the newly formed A-site-bound peptidyl-tRNA and P-site-bound deacylated tRNA move to the P and E sites, respectively. Catalyzes the coordinated movement of the two tRNA molecules, the mRNA and conformational changes in the ribosome. In Burkholderia lata (strain ATCC 17760 / DSM 23089 / LMG 22485 / NCIMB 9086 / R18194 / 383), this protein is Elongation factor G 2.